The sequence spans 541 residues: Chaperonin GroEL (541 aa).

ATP is bound by residues 29–32 (TLGP), 86–90 (DGTTT), Gly413, 477–479 (DAL), and Asp493.

It belongs to the chaperonin (HSP60) family. In terms of assembly, forms a cylinder of 14 subunits composed of two heptameric rings stacked back-to-back. Interacts with the co-chaperonin GroES.

The protein localises to the cytoplasm. It carries out the reaction ATP + H2O + a folded polypeptide = ADP + phosphate + an unfolded polypeptide.. Together with its co-chaperonin GroES, plays an essential role in assisting protein folding. The GroEL-GroES system forms a nano-cage that allows encapsulation of the non-native substrate proteins and provides a physical environment optimized to promote and accelerate protein folding. In Clostridium beijerinckii (strain ATCC 51743 / NCIMB 8052) (Clostridium acetobutylicum), this protein is Chaperonin GroEL.